The sequence spans 199 residues: Dephospho-CoA kinase (199 aa).

The DPCK domain occupies 3–199; that stretch reads VLGLTGSIGM…AAAKMPRRRD (197 aa). Residue 11–16 participates in ATP binding; sequence GMGKST.

This sequence belongs to the CoaE family.

The protein resides in the cytoplasm. The enzyme catalyses 3'-dephospho-CoA + ATP = ADP + CoA + H(+). It functions in the pathway cofactor biosynthesis; coenzyme A biosynthesis; CoA from (R)-pantothenate: step 5/5. Functionally, catalyzes the phosphorylation of the 3'-hydroxyl group of dephosphocoenzyme A to form coenzyme A. This Rhodopseudomonas palustris (strain ATCC BAA-98 / CGA009) protein is Dephospho-CoA kinase.